A 147-amino-acid chain; its full sequence is 6,7-dimethyl-8-ribityllumazine synthase (147 aa).

5-amino-6-(D-ribitylamino)uracil-binding positions include phenylalanine 16, 48 to 50 (TFD), and 73 to 75 (AVI). 78–79 (DT) is a (2S)-2-hydroxy-3-oxobutyl phosphate binding site. Histidine 81 acts as the Proton donor in catalysis. Residue leucine 106 coordinates 5-amino-6-(D-ribitylamino)uracil. A (2S)-2-hydroxy-3-oxobutyl phosphate-binding site is contributed by arginine 121.

Belongs to the DMRL synthase family.

It carries out the reaction (2S)-2-hydroxy-3-oxobutyl phosphate + 5-amino-6-(D-ribitylamino)uracil = 6,7-dimethyl-8-(1-D-ribityl)lumazine + phosphate + 2 H2O + H(+). It functions in the pathway cofactor biosynthesis; riboflavin biosynthesis; riboflavin from 2-hydroxy-3-oxobutyl phosphate and 5-amino-6-(D-ribitylamino)uracil: step 1/2. Its function is as follows. Catalyzes the formation of 6,7-dimethyl-8-ribityllumazine by condensation of 5-amino-6-(D-ribitylamino)uracil with 3,4-dihydroxy-2-butanone 4-phosphate. This is the penultimate step in the biosynthesis of riboflavin. This chain is 6,7-dimethyl-8-ribityllumazine synthase, found in Aeropyrum pernix (strain ATCC 700893 / DSM 11879 / JCM 9820 / NBRC 100138 / K1).